The primary structure comprises 219 residues: MNRYELAQKIDHTLLRPNISLLDIERLCNEAKEFGFYSVCINPYYIPYAKELLKDTKVKICTVIDFPLGASTTSMKVYQVRESLKLGAEEFDMVINIGALKDKKRDYLISEIREVVKAAEGKVVKVIIETCYLTDEEKIYATEIIKEGGAHFVKTSTGFGPQGATVQDVRLLKSIAGNDLKVKASGGIRTFEQALEMINAGADRIGTSSGVSIINGLGK.

Asp92 functions as the Proton donor/acceptor in the catalytic mechanism. Catalysis depends on Lys154, which acts as the Schiff-base intermediate with acetaldehyde. Lys183 functions as the Proton donor/acceptor in the catalytic mechanism.

It belongs to the DeoC/FbaB aldolase family. DeoC type 1 subfamily.

Its subcellular location is the cytoplasm. The enzyme catalyses 2-deoxy-D-ribose 5-phosphate = D-glyceraldehyde 3-phosphate + acetaldehyde. It participates in carbohydrate degradation; 2-deoxy-D-ribose 1-phosphate degradation; D-glyceraldehyde 3-phosphate and acetaldehyde from 2-deoxy-alpha-D-ribose 1-phosphate: step 2/2. Functionally, catalyzes a reversible aldol reaction between acetaldehyde and D-glyceraldehyde 3-phosphate to generate 2-deoxy-D-ribose 5-phosphate. This is Deoxyribose-phosphate aldolase from Dictyoglomus turgidum (strain DSM 6724 / Z-1310).